We begin with the raw amino-acid sequence, 40 residues long: Photosystem II reaction center protein X (40 aa).

A helical membrane pass occupies residues 10–30; that stretch reads FFYSILFGAIVLGLLGGGFIF.

This sequence belongs to the PsbX family. Type 1 subfamily. In terms of assembly, PSII is composed of 1 copy each of membrane proteins PsbA, PsbB, PsbC, PsbD, PsbE, PsbF, PsbH, PsbI, PsbJ, PsbK, PsbL, PsbM, PsbT, PsbX, PsbY, PsbZ, Psb30/Ycf12, peripheral proteins PsbO, CyanoQ (PsbQ), PsbU, PsbV and a large number of cofactors. It forms dimeric complexes.

It localises to the cellular thylakoid membrane. Functionally, involved in the binding and/or turnover of quinones at the Q(B) site of photosystem II (PSII). PSII is a light-driven water plastoquinone oxidoreductase, using light energy to abstract electrons from H(2)O, generating a proton gradient subsequently used for ATP formation. This Acaryochloris marina (strain MBIC 11017) protein is Photosystem II reaction center protein X.